We begin with the raw amino-acid sequence, 441 residues long: Glutamate--tRNA ligase 2 (441 aa).

Positions 8–18 (PSPTGYIHVGN) match the 'HIGH' region motif. Positions 239-243 (ALSKR) match the 'KMSKS' region motif. Lys-242 serves as a coordination point for ATP.

The protein belongs to the class-I aminoacyl-tRNA synthetase family. Glutamate--tRNA ligase type 1 subfamily. Monomer.

The protein localises to the cytoplasm. It carries out the reaction tRNA(Glu) + L-glutamate + ATP = L-glutamyl-tRNA(Glu) + AMP + diphosphate. Functionally, catalyzes the attachment of glutamate to tRNA(Glu) in a two-step reaction: glutamate is first activated by ATP to form Glu-AMP and then transferred to the acceptor end of tRNA(Glu). The sequence is that of Glutamate--tRNA ligase 2 from Ruegeria sp. (strain TM1040) (Silicibacter sp.).